Here is a 297-residue protein sequence, read N- to C-terminus: Large ribosomal subunit protein uL18 (297 aa).

A compositionally biased stretch (basic residues) spans 258–267 (KKAHPKKRWT). Residues 258–277 (KKAHPKKRWTEKKLTREQRQ) are disordered. The segment covering 268–277 (EKKLTREQRQ) has biased composition (basic and acidic residues).

This sequence belongs to the universal ribosomal protein uL18 family. Component of the large ribosomal subunit (LSU).

The protein resides in the cytoplasm. Its subcellular location is the nucleus. Functionally, component of the ribosome, a large ribonucleoprotein complex responsible for the synthesis of proteins in the cell. The small ribosomal subunit (SSU) binds messenger RNAs (mRNAs) and translates the encoded message by selecting cognate aminoacyl-transfer RNA (tRNA) molecules. The large subunit (LSU) contains the ribosomal catalytic site termed the peptidyl transferase center (PTC), which catalyzes the formation of peptide bonds, thereby polymerizing the amino acids delivered by tRNAs into a polypeptide chain. The nascent polypeptides leave the ribosome through a tunnel in the LSU and interact with protein factors that function in enzymatic processing, targeting, and the membrane insertion of nascent chains at the exit of the ribosomal tunnel. The protein is Large ribosomal subunit protein uL18 (RPL5A) of Helianthus annuus (Common sunflower).